The following is a 517-amino-acid chain: Legumin A (517 aa).

Positions 1–21 (MAKLLALSLSFCFLLLGGCFA) are cleaved as a signal peptide. Disulfide bonds link cysteine 31/cysteine 64 and cysteine 107/cysteine 339. Positions 36-232 (LDALEPDNRI…AFNVNRHIVD (197 aa)) constitute a Cupin type-1 1 domain. Residues 249–335 (VKGGLSIISP…SRRQGDNGLE (87 aa)) are disordered. A Cupin type-1 2 domain is found at 345 to 494 (LNIGPSSSPD…TFNLQRNEAR (150 aa)).

The protein belongs to the 11S seed storage protein (globulins) family. In terms of assembly, hexamer; each subunit is composed of an acidic and a basic chain derived from a single precursor and linked by a disulfide bond.

Functionally, this protein found in the seeds of many leguminous and non-leguminous plants is the source of sulfur-containing amino acids in seed meals. The polypeptide is Legumin A (LEGA) (Pisum sativum (Garden pea)).